The chain runs to 382 residues: S-adenosylmethionine synthase (382 aa).

Glu-10 contributes to the Mg(2+) binding site. ATP is bound at residue His-16. Residue Glu-44 coordinates K(+). Glu-57 and Gln-100 together coordinate L-methionine. ATP contacts are provided by residues 166 to 168, 234 to 237, Asp-245, 251 to 252, Ala-268, Lys-272, and Lys-276; these read DTK, SGRF, and RK. Asp-245 contacts L-methionine. Lys-276 lines the L-methionine pocket.

This sequence belongs to the AdoMet synthase family. Mg(2+) is required as a cofactor. It depends on K(+) as a cofactor.

It carries out the reaction L-methionine + ATP + H2O = S-adenosyl-L-methionine + phosphate + diphosphate. It participates in amino-acid biosynthesis; S-adenosyl-L-methionine biosynthesis; S-adenosyl-L-methionine from L-methionine: step 1/1. Catalyzes the formation of S-adenosylmethionine from methionine and ATP. The reaction comprises two steps that are both catalyzed by the same enzyme: formation of S-adenosylmethionine (AdoMet) and triphosphate, and subsequent hydrolysis of the triphosphate. The sequence is that of S-adenosylmethionine synthase (sam1) from Schizosaccharomyces pombe (strain 972 / ATCC 24843) (Fission yeast).